Consider the following 647-residue polypeptide: Putative ankyrin repeat protein L764 (647 aa).

ANK repeat units lie at residues 123–154, 202–231, 233–256, 258–284, 289–319, 348–377, 401–431, 529–558, and 588–617; these read LKDR…QINL, LTQE…EYDL, EIIN…SLNE, NVNI…TINS, SMFS…DLTV, DCNL…DLKK, NDVN…NIDL, FILK…DNNE, and NGQN…DVKN.

This Acanthamoeba polyphaga (Amoeba) protein is Putative ankyrin repeat protein L764.